Here is a 463-residue protein sequence, read N- to C-terminus: Cysteine--tRNA ligase (463 aa).

Cys33 contacts Zn(2+). The 'HIGH' region signature appears at 35 to 45 (PTVYDFAHIGN). Zn(2+)-binding residues include Cys221, His246, and Glu250. The 'KMSKS' region motif lies at 279–283 (KMSKS). Lys282 lines the ATP pocket.

This sequence belongs to the class-I aminoacyl-tRNA synthetase family. Monomer. Zn(2+) serves as cofactor.

It localises to the cytoplasm. It carries out the reaction tRNA(Cys) + L-cysteine + ATP = L-cysteinyl-tRNA(Cys) + AMP + diphosphate. The chain is Cysteine--tRNA ligase from Rhizobium johnstonii (strain DSM 114642 / LMG 32736 / 3841) (Rhizobium leguminosarum bv. viciae).